The primary structure comprises 271 residues: Phosphate import ATP-binding protein PstB 2 (271 aa).

In terms of domain architecture, ABC transporter spans 25-266 (MATEDLHVYY…PQQKQTEDYI (242 aa)). 57–64 (GPSGCGKS) is a binding site for ATP.

Belongs to the ABC transporter superfamily. Phosphate importer (TC 3.A.1.7) family. As to quaternary structure, the complex is composed of two ATP-binding proteins (PstB), two transmembrane proteins (PstC and PstA) and a solute-binding protein (PstS).

The protein resides in the cell membrane. It carries out the reaction phosphate(out) + ATP + H2O = ADP + 2 phosphate(in) + H(+). Its function is as follows. Part of the ABC transporter complex PstSACB involved in phosphate import. Responsible for energy coupling to the transport system. This Listeria monocytogenes serotype 4b (strain F2365) protein is Phosphate import ATP-binding protein PstB 2.